A 130-amino-acid polypeptide reads, in one-letter code: MTYAIVATAGKQFRVEPGRFYDVDRMNVEPEQTVSLDQVLLVHDGDTIAVGQPLVEGATVEATVMQHLRGRKVIVYKMRPKKKTRKKQGHRQELTRLMINAIHLNGSSAKTAAQPAADEAVAANEVDSEA.

The segment at 110-130 is disordered; it reads KTAAQPAADEAVAANEVDSEA. Residues 112–130 show a composition bias toward low complexity; the sequence is AAQPAADEAVAANEVDSEA.

The protein belongs to the bacterial ribosomal protein bL21 family. In terms of assembly, part of the 50S ribosomal subunit. Contacts protein L20.

Its function is as follows. This protein binds to 23S rRNA in the presence of protein L20. This chain is Large ribosomal subunit protein bL21, found in Cyanothece sp. (strain PCC 7425 / ATCC 29141).